Reading from the N-terminus, the 367-residue chain is Otolith matrix protein 1 (367 aa).

The N-terminal stretch at 1 to 23 is a signal peptide; sequence MDRLDRRLAATLLLFSFISFSTQ. One can recognise a Transferrin-like domain in the interval 27–363; sequence ISWCVVSEAE…YTTVLQAFEC (337 aa).

Belongs to the transferrin family. Interacts with OTOL1. As to expression, expressed in the sacculus during the day.

The protein resides in the secreted. Required for normal otolith growth and deposition of otolin-1 in the otolith. This Oncorhynchus mykiss (Rainbow trout) protein is Otolith matrix protein 1 (otomp).